We begin with the raw amino-acid sequence, 602 residues long: Aspartate--tRNA(Asp/Asn) ligase (602 aa).

Glutamate 170 is an L-aspartate binding site. Residues 194-197 (QLFK) are aspartate. Residue arginine 216 participates in L-aspartate binding. Residues 216 to 218 (RDE) and glutamine 225 contribute to the ATP site. Histidine 448 is an L-aspartate binding site. Glutamate 482 is an ATP binding site. Residue arginine 489 coordinates L-aspartate. Residue 534 to 537 (GWDR) coordinates ATP. Positions 559–602 (GGVDPLTSAPAPITAQQRKESGVDAKPEPKGDAAAAKPQVSAEK) are disordered. The segment covering 575 to 589 (QRKESGVDAKPEPKG) has biased composition (basic and acidic residues).

It belongs to the class-II aminoacyl-tRNA synthetase family. Type 1 subfamily. Homodimer.

It is found in the cytoplasm. The enzyme catalyses tRNA(Asx) + L-aspartate + ATP = L-aspartyl-tRNA(Asx) + AMP + diphosphate. In terms of biological role, aspartyl-tRNA synthetase with relaxed tRNA specificity since it is able to aspartylate not only its cognate tRNA(Asp) but also tRNA(Asn). Reaction proceeds in two steps: L-aspartate is first activated by ATP to form Asp-AMP and then transferred to the acceptor end of tRNA(Asp/Asn). The protein is Aspartate--tRNA(Asp/Asn) ligase of Rhodococcus opacus (strain B4).